We begin with the raw amino-acid sequence, 185 residues long: Peptide deformylase (185 aa).

Fe cation-binding residues include Cys109 and His152. Glu153 is an active-site residue. His156 is a Fe cation binding site.

This sequence belongs to the polypeptide deformylase family. Fe(2+) serves as cofactor.

The enzyme catalyses N-terminal N-formyl-L-methionyl-[peptide] + H2O = N-terminal L-methionyl-[peptide] + formate. Its function is as follows. Removes the formyl group from the N-terminal Met of newly synthesized proteins. Requires at least a dipeptide for an efficient rate of reaction. N-terminal L-methionine is a prerequisite for activity but the enzyme has broad specificity at other positions. The polypeptide is Peptide deformylase (Roseiflexus sp. (strain RS-1)).